The chain runs to 582 residues: Formate--tetrahydrofolate ligase (582 aa).

Residue 65–72 (TPLGEGKT) coordinates ATP.

The protein belongs to the formate--tetrahydrofolate ligase family.

It carries out the reaction (6S)-5,6,7,8-tetrahydrofolate + formate + ATP = (6R)-10-formyltetrahydrofolate + ADP + phosphate. The protein operates within one-carbon metabolism; tetrahydrofolate interconversion. This Vibrio cholerae serotype O1 (strain ATCC 39315 / El Tor Inaba N16961) protein is Formate--tetrahydrofolate ligase.